A 931-amino-acid polypeptide reads, in one-letter code: NEDD4-binding protein 1 (931 aa).

The region spanning 75–159 (GKAVRSAKEY…VQQFVKLFEN (85 aa)) is the KH-like domain. Disordered stretches follow at residues 289–329 (MTSK…HNDS), 413–474 (QEWS…TQVD), and 547–571 (CTSA…NSHS). 2 stretches are compositionally biased toward basic and acidic residues: residues 290–309 (TSKE…ESLP) and 319–329 (QEVKSVSHNDS). The span at 416–434 (SSKTPKTTNLRLGSNANSS) shows a compositional bias: polar residues. Basic and acidic residues-rich tracts occupy residues 435–444 (HKLEDEDISC) and 456–467 (NETRTERHKARD). Residues 547 to 557 (CTSAKSKTAVH) show a composition bias toward polar residues. The RNase NYN domain occupies 659–811 (LKHIIIDGSN…LGRNGPRLDD (153 aa)). The segment at 841–863 (LFMHVPNPASSSQQPKNRAHGDH) is disordered. A coCUN region spans residues 884–931 (RSASETVWLREALIKIFPDYEQRQKIDKILADHPFMRDLNALSAMVLD).

It belongs to the N4BP1 family.

It is found in the cytoplasm. It localises to the cytosol. The protein localises to the nucleus. Its subcellular location is the nucleolus. The protein resides in the PML body. In terms of biological role, potent suppressor of cytokine production that acts as a regulator of innate immune signaling and inflammation. Acts as a key negative regulator of select cytokine and chemokine responses elicited by TRIF-independent Toll-like receptors (TLRs), thereby limiting inflammatory cytokine responses to minor insults. Has ribonuclease activity. This Gallus gallus (Chicken) protein is NEDD4-binding protein 1.